Consider the following 299-residue polypeptide: pH-regulated antigen PRA1 (299 aa).

An N-terminal signal peptide occupies residues M1 to A15. N48, N89, N135, and N208 each carry an N-linked (GlcNAc...) asparagine glycan. The tract at residues F253–C299 is disordered. Positions G259–H272 are enriched in low complexity. A compositionally biased stretch (polar residues) spans N278 to H288.

This sequence belongs to the ZPS1 family. In terms of assembly, component of a multiprotein complex of 250 kDa composed of at least HYR1, MP65, and PRA1. Interacts with host Integrin alpha-M/beta-2 heterodimer. Also binds human factor H (CFH), CFHR1, plasminogen (PLG), complement C3, and C4BPA. Interacts with ZRT101. Post-translationally, N- and O-glycosylated. The N- and 0-glycosidically linked carbohydrates represent 18 to 20 percent and 3 to 4 percent, respectively, of the molecular mass of PRA1. 0-linked sugar residues may be involved in the interaction with fibrinogen. Contributes highly to the carbohydrate component of the matrix. Treatment with tunicamycin impairs glycosylation.

Its subcellular location is the secreted. Cell surface protein involved in the host-parasite interaction during candidal infection. With MP65, represents a major component of the biofilm matrix. As a surface protein, binds the two human complement regulators CFH and CFHR1, as well as plasminogen PLG, mediates complement evasion and extra-cellular matrix interaction and/or degradation. As a released protein, enhances complement control in direct vicinity of the yeast and thus generates an additional protective layer which controls host complement attack, assisting the fungus in escaping host surveillance. Binds to host fluid-phase C3 and blocks cleavage of C3 to C3a and C3b, leading to inhibition of complement activation and protection from uptake of C.albicans by human macrophages. Also mediates human complement control and complement evasion through binding to C4BPA, another human complement inhibitor, as well as through binding to host integrin alpha-M/beta-2. Binds zinc from its environment and then reassociates with ZRT1 to acquire this essential metal. In Candida albicans (strain SC5314 / ATCC MYA-2876) (Yeast), this protein is pH-regulated antigen PRA1.